The chain runs to 87 residues: Small ribosomal subunit protein uS15c (87 aa).

Belongs to the universal ribosomal protein uS15 family. As to quaternary structure, part of the 30S ribosomal subunit.

The protein localises to the plastid. It localises to the chloroplast. This is Small ribosomal subunit protein uS15c (rps15) from Solanum lycopersicum (Tomato).